The chain runs to 203 residues: ATP-dependent Clp protease proteolytic subunit 2 (203 aa).

S100 (nucleophile) is an active-site residue. H125 is an active-site residue.

This sequence belongs to the peptidase S14 family. In terms of assembly, fourteen ClpP subunits assemble into 2 heptameric rings which stack back to back to give a disk-like structure with a central cavity, resembling the structure of eukaryotic proteasomes.

Its subcellular location is the cytoplasm. It catalyses the reaction Hydrolysis of proteins to small peptides in the presence of ATP and magnesium. alpha-casein is the usual test substrate. In the absence of ATP, only oligopeptides shorter than five residues are hydrolyzed (such as succinyl-Leu-Tyr-|-NHMec, and Leu-Tyr-Leu-|-Tyr-Trp, in which cleavage of the -Tyr-|-Leu- and -Tyr-|-Trp bonds also occurs).. In terms of biological role, cleaves peptides in various proteins in a process that requires ATP hydrolysis. Has a chymotrypsin-like activity. Plays a major role in the degradation of misfolded proteins. The polypeptide is ATP-dependent Clp protease proteolytic subunit 2 (Thermobifida fusca (strain YX)).